Consider the following 555-residue polypeptide: Sulfite reductase [ferredoxin] 2 (555 aa).

Residues 1–31 are disordered; that stretch reads MTTARPAKARNEGQWALGNREPLNPNEEMKQ. The 3'-(S-cysteinyl)-tyrosine (Tyr-Cys) cross-link spans 69–161; it reads YTQREQGYDG…AVGLRTTEAC (93 aa). The [4Fe-4S] cluster site is built by cysteine 417, cysteine 423, cysteine 463, and cysteine 467. Cysteine 467 provides a ligand contact to siroheme.

The protein belongs to the nitrite and sulfite reductase 4Fe-4S domain family. As to quaternary structure, monomer. Siroheme is required as a cofactor. Requires [4Fe-4S] cluster as cofactor.

It carries out the reaction hydrogen sulfide + 6 oxidized [2Fe-2S]-[ferredoxin] + 3 H2O = sulfite + 6 reduced [2Fe-2S]-[ferredoxin] + 7 H(+). Functionally, catalyzes the reduction of sulfite to sulfide, a step in the biosynthesis of sulfur-containing amino acids and cofactors. The polypeptide is Sulfite reductase [ferredoxin] 2 (sir2) (Mycolicibacterium paratuberculosis (strain ATCC BAA-968 / K-10) (Mycobacterium paratuberculosis)).